The primary structure comprises 62 residues: Sauvatide (62 aa).

The first 24 residues, methionine 1 to glycine 24, serve as a signal peptide directing secretion. A propeptide spanning residues glutamate 25–glutamate 46 is cleaved from the precursor. Residue lysine 58 is modified to Lysine amide.

In terms of tissue distribution, expressed by the skin glands.

It localises to the secreted. Its function is as follows. Induces contraction of smooth muscle in isolated rat urinary bladder with an EC(50) value of 2.2nM. This Phyllomedusa sauvagei (Sauvage's leaf frog) protein is Sauvatide.